The following is a 290-amino-acid chain: Glucuronoxylan 4-O-methyltransferase 2 (290 aa).

A helical membrane pass occupies residues 8–28 (FISSKLIFICCSILVLFILFL).

Belongs to the methyltransferase superfamily. As to expression, expressed in roots, rosette leaves and stems.

It is found in the golgi apparatus membrane. It catalyses the reaction glucuronoxylan D-glucuronate + n S-adenosyl-L-methionine = glucuronoxylan 4-O-methyl-D-glucuronate + n S-adenosyl-L-homocysteine + n H(+). In terms of biological role, methyltransferase catalyzing 4-O-methylation of glucuronic acid side chains on xylan. This chain is Glucuronoxylan 4-O-methyltransferase 2 (GXM2), found in Arabidopsis thaliana (Mouse-ear cress).